The primary structure comprises 217 residues: Protein dao-4 (217 aa).

The N-terminal stretch at Met1 to Ala21 is a signal peptide.

It is found in the nucleus. Its subcellular location is the secreted. Probably acts downstream of the Wnt signaling pathway. This is Protein dao-4 from Caenorhabditis elegans.